The chain runs to 390 residues: UPF0229 protein OB2647 (390 aa).

Positions 99 to 121 (NASQQGQQGQGNGKKAGDQPGTD) are disordered.

The protein belongs to the UPF0229 family.

This Oceanobacillus iheyensis (strain DSM 14371 / CIP 107618 / JCM 11309 / KCTC 3954 / HTE831) protein is UPF0229 protein OB2647.